The sequence spans 265 residues: Thiazole synthase (265 aa).

Lys107 functions as the Schiff-base intermediate with DXP in the catalytic mechanism. 1-deoxy-D-xylulose 5-phosphate is bound by residues Gly168, 194–195 (AG), and 216–217 (NT).

The protein belongs to the ThiG family. Homotetramer. Forms heterodimers with either ThiH or ThiS.

The protein localises to the cytoplasm. It carries out the reaction [ThiS sulfur-carrier protein]-C-terminal-Gly-aminoethanethioate + 2-iminoacetate + 1-deoxy-D-xylulose 5-phosphate = [ThiS sulfur-carrier protein]-C-terminal Gly-Gly + 2-[(2R,5Z)-2-carboxy-4-methylthiazol-5(2H)-ylidene]ethyl phosphate + 2 H2O + H(+). It functions in the pathway cofactor biosynthesis; thiamine diphosphate biosynthesis. In terms of biological role, catalyzes the rearrangement of 1-deoxy-D-xylulose 5-phosphate (DXP) to produce the thiazole phosphate moiety of thiamine. Sulfur is provided by the thiocarboxylate moiety of the carrier protein ThiS. In vitro, sulfur can be provided by H(2)S. In Pseudomonas paraeruginosa (strain DSM 24068 / PA7) (Pseudomonas aeruginosa (strain PA7)), this protein is Thiazole synthase.